Consider the following 220-residue polypeptide: Large ribosomal subunit protein uL1 (220 aa).

Belongs to the universal ribosomal protein uL1 family. As to quaternary structure, part of the 50S ribosomal subunit.

In terms of biological role, binds directly to 23S rRNA. The L1 stalk is quite mobile in the ribosome, and is involved in E site tRNA release. Functionally, protein L1 is also a translational repressor protein, it controls the translation of the L11 operon by binding to its mRNA. This is Large ribosomal subunit protein uL1 from Ehrlichia ruminantium (strain Gardel).